The following is a 581-amino-acid chain: Arginine--tRNA ligase (581 aa).

The short motif at 126–136 (PNLAKEMHVGH) is the 'HIGH' region element.

The protein belongs to the class-I aminoacyl-tRNA synthetase family. As to quaternary structure, monomer.

It localises to the cytoplasm. It catalyses the reaction tRNA(Arg) + L-arginine + ATP = L-arginyl-tRNA(Arg) + AMP + diphosphate. The protein is Arginine--tRNA ligase of Shewanella sp. (strain MR-4).